The primary structure comprises 564 residues: DNA ligase B (564 aa).

Lys130 (N6-AMP-lysine intermediate) is an active-site residue.

This sequence belongs to the NAD-dependent DNA ligase family. LigB subfamily.

The catalysed reaction is NAD(+) + (deoxyribonucleotide)n-3'-hydroxyl + 5'-phospho-(deoxyribonucleotide)m = (deoxyribonucleotide)n+m + AMP + beta-nicotinamide D-nucleotide.. Catalyzes the formation of phosphodiester linkages between 5'-phosphoryl and 3'-hydroxyl groups in double-stranded DNA using NAD as a coenzyme and as the energy source for the reaction. The chain is DNA ligase B from Klebsiella pneumoniae subsp. pneumoniae (strain ATCC 700721 / MGH 78578).